The chain runs to 376 residues: DNA double-strand break repair protein Mre11 (376 aa).

Residues Asp-5, His-7, Asp-46, and Asp-81 each contribute to the Mn(2+) site. His-82 serves as the catalytic Proton donor. Mn(2+) contacts are provided by His-159, His-189, and His-191.

This sequence belongs to the MRE11/RAD32 family. Homodimer. Forms a heterotetramer composed of two Mre11 subunits and two Rad50 subunits. Requires Mn(2+) as cofactor.

Nuclease activity is regulated by Rad50. Functionally, part of the Rad50/Mre11 complex, which is involved in the early steps of DNA double-strand break (DSB) repair. The complex may facilitate opening of the processed DNA ends to aid in the recruitment of HerA and NurA. Mre11 binds to DSB ends and has both double-stranded 3'-5' exonuclease activity and single-stranded endonuclease activity. This is DNA double-strand break repair protein Mre11 from Thermoplasma acidophilum (strain ATCC 25905 / DSM 1728 / JCM 9062 / NBRC 15155 / AMRC-C165).